We begin with the raw amino-acid sequence, 186 residues long: ADP-ribosylation factor-like protein 6 (186 aa).

G2 is lipidated: N-myristoyl glycine. GTP is bound by residues 24 to 31, T50, 69 to 73, G72, 130 to 133, and A164; these read GLDNSGKT, DMSGQ, and NKMD. T50 contacts Mg(2+).

This sequence belongs to the small GTPase superfamily. Arf family. As to expression, expressed in brain, heart and eye. Isoform 2 is expressed only in the retina.

Its subcellular location is the cell projection. It is found in the cilium membrane. The protein resides in the cytoplasm. It localises to the cytoskeleton. The protein localises to the cilium axoneme. Its subcellular location is the cilium basal body. Its function is as follows. Probably involved in membrane protein trafficking at the base of the ciliary organelle. May function in cilia biogenesis. Isoform 2 is required for proper retinal function and organization. This is ADP-ribosylation factor-like protein 6 (arl6) from Danio rerio (Zebrafish).